The primary structure comprises 61 residues: Large ribosomal subunit protein uL30 (61 aa).

Belongs to the universal ribosomal protein uL30 family. Part of the 50S ribosomal subunit.

This Shewanella piezotolerans (strain WP3 / JCM 13877) protein is Large ribosomal subunit protein uL30.